The chain runs to 143 residues: Interleukin-3 (143 aa).

The first 23 residues, 1 to 23 (MSSFPILHLLLLLLGCQVPQAQG), serve as a signal peptide directing secretion. N-linked (GlcNAc...) asparagine glycosylation is present at asparagine 79.

This sequence belongs to the IL-3 family. In terms of assembly, monomer.

Its subcellular location is the secreted. Functionally, granulocyte/macrophage colony-stimulating factors are cytokines that act in hematopoiesis by controlling the production, differentiation, and function of 2 related white cell populations of the blood, the granulocytes and the monocytes-macrophages. This CSF induces granulocytes, macrophages, mast cells, stem cells, erythroid cells, eosinophils and megakaryocytes. The chain is Interleukin-3 (IL3) from Canis lupus familiaris (Dog).